The sequence spans 557 residues: Ribonuclease J 2 (557 aa).

Residues His76, His78, His144, and Glu166 each contribute to the Zn(2+) site. Residue His366 to His370 coordinates substrate.

Belongs to the metallo-beta-lactamase superfamily. RNA-metabolizing metallo-beta-lactamase-like family. Bacterial RNase J subfamily. In terms of assembly, homodimer, may be a subunit of the RNA degradosome. Requires Zn(2+) as cofactor.

The protein localises to the cytoplasm. Functionally, an RNase that has 5'-3' exonuclease and possibly endoonuclease activity. Involved in maturation of rRNA and in some organisms also mRNA maturation and/or decay. The sequence is that of Ribonuclease J 2 from Staphylococcus aureus (strain MRSA252).